A 74-amino-acid chain; its full sequence is Anionic peptide clone 9 (74 aa).

The N-terminal stretch at 1–24 (MVSKSLIVLLLVSVLVSTFFTTEA) is a signal peptide.

This sequence belongs to the non-disulfide-bridged peptide (NDBP) superfamily. Long chain multifunctional peptide (group 2) family. As to expression, expressed by the venom gland.

Its subcellular location is the secreted. May be an antimicrobial peptide. This is Anionic peptide clone 9 from Tityus costatus (Brazilian scorpion).